Here is a 174-residue protein sequence, read N- to C-terminus: uncharacterized protein (174 aa).

The N-acetyltransferase domain maps to 42–174 (SSNKNINLYE…GVKGMFWYPR (133 aa)).

The protein belongs to the acetyltransferase family. Ycf52 subfamily.

Its subcellular location is the plastid. It is found in the chloroplast. This is an uncharacterized protein from Pyropia yezoensis (Susabi-nori).